A 228-amino-acid chain; its full sequence is Max-interacting protein 1 (228 aa).

2 disordered regions span residues 29–76 (GYAS…NELE) and 161–228 (IGST…SFTS). A compositionally biased stretch (basic residues) spans 43–56 (QHSKPPRRLSRAQK). The span at 57 to 70 (HSSGSSNTSTANRS) shows a compositional bias: polar residues. The bHLH domain occupies 67 to 119 (ANRSTHNELEKNRRAHLRLCLERLKVLIPLGPDCTRHTTLGLLNKAKAHIKKL). The span at 173-183 (EREEIEVDVES) shows a compositional bias: acidic residues. The segment covering 216–228 (GYSSASVKLSFTS) has biased composition (polar residues).

Interacts with SMC3. Efficient DNA binding requires dimerization with another bHLH protein. Binds DNA as a heterodimer with MAX. Interacts with RNF17. As to expression, high levels found in the brain, heart and lung while lower levels are seen in the liver, kidney and skeletal muscle.

The protein localises to the nucleus. Transcriptional repressor. MXI1 binds with MAX to form a sequence-specific DNA-binding protein complex which recognizes the core sequence 5'-CAC[GA]TG-3'. MXI1 thus antagonizes MYC transcriptional activity by competing for MAX. The sequence is that of Max-interacting protein 1 (MXI1) from Homo sapiens (Human).